A 425-amino-acid chain; its full sequence is Glutamate-1-semialdehyde 2,1-aminomutase (425 aa).

Residue K265 is modified to N6-(pyridoxal phosphate)lysine.

Belongs to the class-III pyridoxal-phosphate-dependent aminotransferase family. HemL subfamily. Homodimer. It depends on pyridoxal 5'-phosphate as a cofactor.

It is found in the cytoplasm. It catalyses the reaction (S)-4-amino-5-oxopentanoate = 5-aminolevulinate. The protein operates within porphyrin-containing compound metabolism; protoporphyrin-IX biosynthesis; 5-aminolevulinate from L-glutamyl-tRNA(Glu): step 2/2. This Thiobacillus denitrificans (strain ATCC 25259 / T1) protein is Glutamate-1-semialdehyde 2,1-aminomutase.